We begin with the raw amino-acid sequence, 322 residues long: MQEQRAERLRIALIAGGTSGEREVSLTGADGVERILDKEKYLVSRYDSATDLPRLAADAASIDFAFILLHGLHGEDGTIQGFLDLLGIPYQGSGVLGSALAMDKDLAKEFYYNAELPVADWHTIAAGDFFYSEELIEDLGLPLVVKPACAGSSIGISLAHTEEELLAGINHARDCSAGAIMVEQFIKGRELTCAVLGNDDLQALPVLEIVPGDKYAFFDYEAKYQPGASEEICPALIADALREQVQDHAIRAHQALRLRGYSRTDFIYGEDGKLYLLETNTIPGMTETSILPQEAAATGMDFPSLLDTLIELGLEKSKGKKG.

An ATP-grasp domain is found at 108 to 311 (KEFYYNAELP…FPSLLDTLIE (204 aa)). Residue 136-192 (IEDLGLPLVVKPACAGSSIGISLAHTEEELLAGINHARDCSAGAIMVEQFIKGRELT) participates in ATP binding. Mg(2+) is bound by residues D265, E278, and N280.

This sequence belongs to the D-alanine--D-alanine ligase family. Mg(2+) serves as cofactor. Requires Mn(2+) as cofactor.

It localises to the cytoplasm. It carries out the reaction 2 D-alanine + ATP = D-alanyl-D-alanine + ADP + phosphate + H(+). It participates in cell wall biogenesis; peptidoglycan biosynthesis. Functionally, cell wall formation. The protein is D-alanine--D-alanine ligase of Desulfotalea psychrophila (strain LSv54 / DSM 12343).